The following is a 466-amino-acid chain: Asparagine--tRNA ligase (466 aa).

This sequence belongs to the class-II aminoacyl-tRNA synthetase family. In terms of assembly, homodimer.

Its subcellular location is the cytoplasm. It catalyses the reaction tRNA(Asn) + L-asparagine + ATP = L-asparaginyl-tRNA(Asn) + AMP + diphosphate + H(+). The protein is Asparagine--tRNA ligase of Shewanella frigidimarina (strain NCIMB 400).